A 267-amino-acid chain; its full sequence is tRNA pseudouridine synthase A (267 aa).

D51 acts as the Nucleophile in catalysis. Substrate is bound at residue Y109.

Belongs to the tRNA pseudouridine synthase TruA family. In terms of assembly, homodimer.

The catalysed reaction is uridine(38/39/40) in tRNA = pseudouridine(38/39/40) in tRNA. Functionally, formation of pseudouridine at positions 38, 39 and 40 in the anticodon stem and loop of transfer RNAs. This chain is tRNA pseudouridine synthase A, found in Staphylococcus epidermidis (strain ATCC 35984 / DSM 28319 / BCRC 17069 / CCUG 31568 / BM 3577 / RP62A).